A 417-amino-acid chain; its full sequence is MSGRSRGRKSSRAKNRGKGRAKARVRPAPDDAPRDPDPSQYQSLGEDTQAAQVQAGAGWGGLEAAASAQLLRLGEEAACRLPLDCGLALRARAAGDHGQAAARPGPGKAASLSERLAADTVFVGTAGTVGRPKNAPRVGNRRGPAGKKAPETCSTAGRGPQVIAGGRQKKGAAGENTSVSAGEEKKEERDAGSGPPATEGSMDTLENVQLKLENMNAQADRAYLRLSRKFGQLRLQHLERRNHLIQNIPGFWGQAFQNHPQLASFLNSQEKEVLSYLNSLEVEELGLARLGYKIKFYFDRNPYFQNKVLIKEYGCGPSGQVVSRSTPIQWLPGHDLQSLSQGNPENNRSFFGWFSNHSSIESDKIVEIINEELWPNPLQFYLLSEGARVEKGKEKEGRQGPGKQPMETTQPGVSQSN.

Residues 1 to 25 (MSGRSRGRKSSRAKNRGKGRAKARV) are compositionally biased toward basic residues. 4 disordered regions span residues 1-55 (MSGR…QVQA), 93-112 (AAGD…AASL), 127-202 (GTVG…EGSM), and 391-417 (KGKE…SQSN). The span at 27 to 37 (PAPDDAPRDPD) shows a compositional bias: basic and acidic residues. Over residues 93-103 (AAGDHGQAAAR) the composition is skewed to low complexity. The segment covering 182 to 191 (GEEKKEERDA) has biased composition (basic and acidic residues). Residues 406–417 (METTQPGVSQSN) show a composition bias toward polar residues.

This sequence belongs to the nucleosome assembly protein (NAP) family. In terms of assembly, interacts with USP7.

Functionally, involved in modulation of cell growth and cellular response to gamma radiation probably via regulation of the Akt signaling pathway. Involved in regulation of p53/TP53. Suppresses p53/TP53 protein levels and promotes its ubiquitination; the function is dependent on USP7 and independent on MDM2. Proposed to displace p53/TP53 from interaction with USP7. This is Testis-specific Y-encoded-like protein 5 (TSPYL5) from Homo sapiens (Human).